Here is a 438-residue protein sequence, read N- to C-terminus: MAALVVSETAEPGSRVGPGRGRISRGRLANQIPPEVLNNPQLQAAVQVLPSNYNFEIPKTIWRIQQAQAKKVALQMPEGLLLFACTIVDILERFTEAEVMVMGDVTYGACCVDDFTARALGVDFLVHYGHSCLVPMDTSVQDFRVLYVFVDIRIDTAHLLDSVRLTFTPGSSLALVSTIQFVSTLQAAAQELKADYHISVPQCKPLSPGEILGCTSPRLSKEVEAVVYLGDGRFHLESVMIANPNIPAYRYDPYGKVLSREYYDHQRMQATRQEAIAAARSAKSWGLILGTLGRQGSPKILEHLESQLRNLGLPFVRLLLSEIFPSKLSLLPEVDVWVQVACPRLSIDWGSAFPKPLLTPYEAAVALKDISWQQPYPMDFYSGSSLGPWTVNYGRDRAPRGLCQPASDKVQQGSRGGSPAPACESCNCADQKATSPAP.

Residues 1–24 form a disordered region; that stretch reads MAALVVSETAEPGSRVGPGRGRIS. Residues C110, C214, and C342 each contribute to the [4Fe-4S] cluster site. The tract at residues 402–438 is disordered; sequence LCQPASDKVQQGSRGGSPAPACESCNCADQKATSPAP. S418 bears the Phosphoserine mark.

This sequence belongs to the DPH1/DPH2 family. DPH1 subfamily. As to quaternary structure, component of the 2-(3-amino-3-carboxypropyl)histidine synthase complex composed of DPH1, DPH2, DPH3 and a NADH-dependent reductase. Interacts with DPH2. Interacts with RBM8A. [4Fe-4S] cluster serves as cofactor. Strongly expressed in kidney and liver. Moderately expressed in brain, skin and testis. Weakly expressed in heart, lung, small intestine, spleen, stomach and thymus.

The protein resides in the nucleus. The protein localises to the cytoplasm. The enzyme catalyses L-histidyl-[translation elongation factor 2] + S-adenosyl-L-methionine = 2-[(3S)-amino-3-carboxypropyl]-L-histidyl-[translation elongation factor 2] + S-methyl-5'-thioadenosine + H(+). It participates in protein modification; peptidyl-diphthamide biosynthesis. Functionally, catalyzes the first step of diphthamide biosynthesis, a post-translational modification of histidine which occurs in elongation factor 2. DPH1 and DPH2 transfer a 3-amino-3-carboxypropyl (ACP) group from S-adenosyl-L-methionine (SAM) to a histidine residue, the reaction is assisted by a reduction system comprising DPH3 and a NADH-dependent reductase. Acts as a tumor suppressor. The polypeptide is 2-(3-amino-3-carboxypropyl)histidine synthase subunit 1 (Mus musculus (Mouse)).